The sequence spans 278 residues: Maltodextrin transport system permease protein MdxG (278 aa).

The next 6 membrane-spanning stretches (helical) occupy residues 12–32 (ICTY…LLIT), 74–94 (TLVI…LAGY), 108–128 (LIFF…AFYV), 131–151 (MLIG…GGGI), 183–203 (IFAS…ALWA), and 242–262 (VALF…LFFF). In terms of domain architecture, ABC transmembrane type-1 spans 71 to 263 (YSNTLVIALS…LPICVLFFFL (193 aa)).

It belongs to the binding-protein-dependent transport system permease family. MalFG subfamily. As to quaternary structure, the complex is composed of two ATP-binding proteins (MsmX), two transmembrane proteins (MdxF and MdxG) and a solute-binding protein (MdxE).

It is found in the cell membrane. In terms of biological role, part of the ABC transporter complex involved in maltodextrin import. Probably responsible for the translocation of the substrate across the membrane. The chain is Maltodextrin transport system permease protein MdxG (mdxG) from Bacillus subtilis (strain 168).